The chain runs to 94 residues: Pyrimidine/purine nucleoside phosphorylase (94 aa).

This sequence belongs to the nucleoside phosphorylase PpnP family.

It catalyses the reaction a purine D-ribonucleoside + phosphate = a purine nucleobase + alpha-D-ribose 1-phosphate. The enzyme catalyses adenosine + phosphate = alpha-D-ribose 1-phosphate + adenine. The catalysed reaction is cytidine + phosphate = cytosine + alpha-D-ribose 1-phosphate. It carries out the reaction guanosine + phosphate = alpha-D-ribose 1-phosphate + guanine. It catalyses the reaction inosine + phosphate = alpha-D-ribose 1-phosphate + hypoxanthine. The enzyme catalyses thymidine + phosphate = 2-deoxy-alpha-D-ribose 1-phosphate + thymine. The catalysed reaction is uridine + phosphate = alpha-D-ribose 1-phosphate + uracil. It carries out the reaction xanthosine + phosphate = alpha-D-ribose 1-phosphate + xanthine. Its function is as follows. Catalyzes the phosphorolysis of diverse nucleosides, yielding D-ribose 1-phosphate and the respective free bases. Can use uridine, adenosine, guanosine, cytidine, thymidine, inosine and xanthosine as substrates. Also catalyzes the reverse reactions. This is Pyrimidine/purine nucleoside phosphorylase from Salmonella paratyphi C (strain RKS4594).